The sequence spans 193 residues: Large ribosomal subunit protein uL5 (193 aa).

The protein belongs to the universal ribosomal protein uL5 family. Part of the 50S ribosomal subunit; part of the 5S rRNA/L5/L18/L25 subcomplex. Contacts the 5S rRNA and the P site tRNA. Forms a bridge to the 30S subunit in the 70S ribosome.

This is one of the proteins that bind and probably mediate the attachment of the 5S RNA into the large ribosomal subunit, where it forms part of the central protuberance. In the 70S ribosome it contacts protein S13 of the 30S subunit (bridge B1b), connecting the 2 subunits; this bridge is implicated in subunit movement. Contacts the P site tRNA; the 5S rRNA and some of its associated proteins might help stabilize positioning of ribosome-bound tRNAs. The chain is Large ribosomal subunit protein uL5 from Arthrobacter sp. (strain FB24).